Consider the following 123-residue polypeptide: SPbeta prophage-derived uncharacterized protein YorE (123 aa).

This chain is SPbeta prophage-derived uncharacterized protein YorE (yorE), found in Bacillus subtilis (strain 168).